The chain runs to 749 residues: Protein phosphatase 1E (749 aa).

Residues 21–128 are disordered; that stretch reads EFRGPCGGGE…PPLPPLPRPL (108 aa). 3 consecutive repeat copies span residues 31–32, 33–34, and 35–36. The interval 31 to 44 is 7 X 2 AA tandem repeats of P-E; it reads PEPEPESEPEPEPE. The span at 31 to 45 shows a compositional bias: acidic residues; that stretch reads PEPEPESEPEPEPEA. The 4; approximate repeat unit spans residues 37-38; it reads SE. Repeat copies occupy residues 39–40, 41–42, and 43–44. Residues 46–55 are compositionally biased toward low complexity; it reads ELVAAEAAEA. The segment covering 69–102 has biased composition (acidic residues); sequence ATEEGEQDQDPEPEDEAVEEETATEGEEEEEEEA. Over residues 110-126 the composition is skewed to pro residues; that stretch reads VPPPPQPQLPPLPPLPR. Residues 224–485 enclose the PPM-type phosphatase domain; the sequence is QIYYETSIHA…DNITVIVVFL (262 aa). Residues Asp270, Gly271, Asp432, and Asp476 each contribute to the Mn(2+) site. The interval 495-537 is disordered; that stretch reads SEESEWTENSFQGGQEDGGDDKETHGECKRPWPQHQCSAPADL. The segment covering 515 to 524 has biased composition (basic and acidic residues); the sequence is DKETHGECKR. Phosphoserine occurs at positions 532 and 545. Residues 608 to 627 form a disordered region; it reads VKSSLPERSGAGEPRVSFNL.

Belongs to the PP2C family. As to quaternary structure, heterotrimer. Interacts with PAX1 and ARHGEF6 (or ARHGEF7). Mg(2+) serves as cofactor. The cofactor is Mn(2+).

Its subcellular location is the nucleus. The protein resides in the cytoplasm. The enzyme catalyses O-phospho-L-seryl-[protein] + H2O = L-seryl-[protein] + phosphate. It catalyses the reaction O-phospho-L-threonyl-[protein] + H2O = L-threonyl-[protein] + phosphate. Its function is as follows. Protein phosphatase that inactivates multifunctional CaM kinases such as CAMK4 and CAMK2. Dephosphorylates and inactivates PAK. May play a role in the inhibition of actin fiber stress breakdown and in morphological changes driven by TNK2/CDC42. Dephosphorylates PRKAA2. This is Protein phosphatase 1E (Ppm1e) from Mus musculus (Mouse).